The chain runs to 126 residues: Small ribosomal subunit protein uS12 (126 aa).

Residues 1–26 (MPTINQLVRKGRASETTKSKSPALQD) form a disordered region. A 3-methylthioaspartic acid modification is found at aspartate 89. Positions 103–126 (DTQGVKDRKQARSKYGAKRAKAGK) are disordered. Residues 113 to 126 (ARSKYGAKRAKAGK) show a composition bias toward basic residues.

This sequence belongs to the universal ribosomal protein uS12 family. Part of the 30S ribosomal subunit. Contacts proteins S8 and S17. May interact with IF1 in the 30S initiation complex.

Its function is as follows. With S4 and S5 plays an important role in translational accuracy. In terms of biological role, interacts with and stabilizes bases of the 16S rRNA that are involved in tRNA selection in the A site and with the mRNA backbone. Located at the interface of the 30S and 50S subunits, it traverses the body of the 30S subunit contacting proteins on the other side and probably holding the rRNA structure together. The combined cluster of proteins S8, S12 and S17 appears to hold together the shoulder and platform of the 30S subunit. This is Small ribosomal subunit protein uS12 from Paraburkholderia xenovorans (strain LB400).